A 293-amino-acid polypeptide reads, in one-letter code: Protein translocase subunit SecF (293 aa).

The next 6 helical transmembrane spans lie at 10–30 (ARIF…SMFA), 130–150 (VKSA…YITI), 158–178 (LAAI…FSVL), 185–205 (SFVA…IVVF), 244–264 (LFAV…FSFA), and 267–287 (VGFC…WLFF).

It belongs to the SecD/SecF family. SecF subfamily. As to quaternary structure, forms a complex with SecD. Part of the essential Sec protein translocation apparatus which comprises SecA, SecYEG and auxiliary proteins SecDF. Other proteins may also be involved.

It is found in the cell membrane. Part of the Sec protein translocase complex. Interacts with the SecYEG preprotein conducting channel. SecDF uses the proton motive force (PMF) to complete protein translocation after the ATP-dependent function of SecA. The chain is Protein translocase subunit SecF from Acidaminococcus fermentans (strain ATCC 25085 / DSM 20731 / CCUG 9996 / CIP 106432 / VR4).